The following is a 181-amino-acid chain: Malignant T-cell-amplified sequence 1-A (181 aa).

In terms of domain architecture, PUA spans 92-171; the sequence is LPHQQVDKGA…IGIENIHYLN (80 aa).

This sequence belongs to the MCTS1 family.

The protein localises to the cytoplasm. Plays a role as translation enhancer and involved in cell cycle regulation. The protein is Malignant T-cell-amplified sequence 1-A (mcts1-a) of Xenopus laevis (African clawed frog).